Reading from the N-terminus, the 444-residue chain is MREILHIQGGQCGNQIGAKFWEVICDEHGIDHTGQYVGDSPLQLERIDVYFNEASGGKYVPRAVLMDLEPGTMDSLRSGPFGQIFRPDNFVFGQSGAGNNWAKGHYTEGAELIDSVLDVVRKEAENSDCLQGFQVCHSLGGGTGSGMGTLLISKIREEYPDRMMMTFSVFPSPKVSDTVVEPYNATLSVHQLVENADECMVLDNEALYDICFRTLKLANPTFGDLNHLISATMSGVTCCLRFPGQLNSDLRKLAVNLIPFPRLHFFMVGFAPLTSRGSQQYSALSVPELTQQMWDAKNMMCAADPRHGRYLTASAVFRGKLSTKEVDEQMMNIQNKNSSYFVEWIPNNVKSSVCDIAPKGLKMASTFIGNSTSIQEMFRRVSEQFTAMFRRKAFLHWYTGEGMDEMEFTEAESNMNDLVAEYQQYQDATAGEEEYEEEEEEYET.

8 residues coordinate GTP: Gln-11, Glu-69, Ser-138, Gly-142, Thr-143, Gly-144, Asn-204, and Asn-226. Glu-69 contributes to the Mg(2+) binding site.

This sequence belongs to the tubulin family. Dimer of alpha and beta chains. A typical microtubule is a hollow water-filled tube with an outer diameter of 25 nm and an inner diameter of 15 nM. Alpha-beta heterodimers associate head-to-tail to form protofilaments running lengthwise along the microtubule wall with the beta-tubulin subunit facing the microtubule plus end conferring a structural polarity. Microtubules usually have 13 protofilaments but different protofilament numbers can be found in some organisms and specialized cells. Mg(2+) is required as a cofactor.

Its subcellular location is the cytoplasm. The protein resides in the cytoskeleton. In terms of biological role, tubulin is the major constituent of microtubules, a cylinder consisting of laterally associated linear protofilaments composed of alpha- and beta-tubulin heterodimers. Microtubules grow by the addition of GTP-tubulin dimers to the microtubule end, where a stabilizing cap forms. Below the cap, tubulin dimers are in GDP-bound state, owing to GTPase activity of alpha-tubulin. This Arabidopsis thaliana (Mouse-ear cress) protein is Tubulin beta-4 chain (TUBB4).